The following is a 367-amino-acid chain: UDP-N-acetylglucosamine--N-acetylmuramyl-(pentapeptide) pyrophosphoryl-undecaprenol N-acetylglucosamine transferase (367 aa).

UDP-N-acetyl-alpha-D-glucosamine is bound by residues 15-17, Asn127, Arg163, Ser191, Ile249, and Gln294; that span reads TGG.

The protein belongs to the glycosyltransferase 28 family. MurG subfamily.

Its subcellular location is the cell inner membrane. The catalysed reaction is di-trans,octa-cis-undecaprenyl diphospho-N-acetyl-alpha-D-muramoyl-L-alanyl-D-glutamyl-meso-2,6-diaminopimeloyl-D-alanyl-D-alanine + UDP-N-acetyl-alpha-D-glucosamine = di-trans,octa-cis-undecaprenyl diphospho-[N-acetyl-alpha-D-glucosaminyl-(1-&gt;4)]-N-acetyl-alpha-D-muramoyl-L-alanyl-D-glutamyl-meso-2,6-diaminopimeloyl-D-alanyl-D-alanine + UDP + H(+). It functions in the pathway cell wall biogenesis; peptidoglycan biosynthesis. Functionally, cell wall formation. Catalyzes the transfer of a GlcNAc subunit on undecaprenyl-pyrophosphoryl-MurNAc-pentapeptide (lipid intermediate I) to form undecaprenyl-pyrophosphoryl-MurNAc-(pentapeptide)GlcNAc (lipid intermediate II). This Burkholderia multivorans (strain ATCC 17616 / 249) protein is UDP-N-acetylglucosamine--N-acetylmuramyl-(pentapeptide) pyrophosphoryl-undecaprenol N-acetylglucosamine transferase.